The sequence spans 325 residues: Eukaryotic translation initiation factor 3 subunit I (325 aa).

WD repeat units lie at residues 8–47 (GHERSITQIKYNREGDLLFTVAKDPIVNVWYSVNGERLGT), 50–91 (GHTG…ALLK), 144–183 (CNDSKITSAVWGPLGECIIAGHESGELNQYSAKSGEVLVN), and 186–225 (EHSRQINDIQLSRDMTMFVTASKDNTAKLFDSTTLEHQKT). Phosphothreonine is present on Thr-219. Lys-264 is modified (N6-acetyllysine). A Glycyl lysine isopeptide (Lys-Gly) (interchain with G-Cter in ubiquitin) cross-link involves residue Lys-282. One copy of the WD 5 repeat lies at 283 to 324 (GHFGLINSVAFHPDGKSYSSGGEDGYVRIHYFDPQYFEFEFE). Residue Tyr-308 is modified to Phosphotyrosine.

The protein belongs to the eIF-3 subunit I family. Component of the eukaryotic translation initiation factor 3 (eIF-3) complex, which is composed of 13 subunits: EIF3A, EIF3B, EIF3C, EIF3D, EIF3E, EIF3F, EIF3G, EIF3H, EIF3I, EIF3J, EIF3K, EIF3L and EIF3M. The eIF-3 complex appears to include 3 stable modules: module A is composed of EIF3A, EIF3B, EIF3G and EIF3I; module B is composed of EIF3F, EIF3H, and EIF3M; and module C is composed of EIF3C, EIF3D, EIF3E, EIF3K and EIF3L. EIF3C of module C binds EIF3B of module A and EIF3H of module B, thereby linking the three modules. EIF3J is a labile subunit that binds to the eIF-3 complex via EIF3B. The eIF-3 complex interacts with RPS6KB1 under conditions of nutrient depletion. Mitogenic stimulation leads to binding and activation of a complex composed of MTOR and RPTOR, leading to phosphorylation and release of RPS6KB1 and binding of EIF4B to eIF-3. Post-translationally, phosphorylated by TGF-beta type II receptor.

The protein localises to the cytoplasm. In terms of biological role, component of the eukaryotic translation initiation factor 3 (eIF-3) complex, which is required for several steps in the initiation of protein synthesis. The eIF-3 complex associates with the 40S ribosome and facilitates the recruitment of eIF-1, eIF-1A, eIF-2:GTP:methionyl-tRNAi and eIF-5 to form the 43S pre-initiation complex (43S PIC). The eIF-3 complex stimulates mRNA recruitment to the 43S PIC and scanning of the mRNA for AUG recognition. The eIF-3 complex is also required for disassembly and recycling of post-termination ribosomal complexes and subsequently prevents premature joining of the 40S and 60S ribosomal subunits prior to initiation. The eIF-3 complex specifically targets and initiates translation of a subset of mRNAs involved in cell proliferation, including cell cycling, differentiation and apoptosis, and uses different modes of RNA stem-loop binding to exert either translational activation or repression. The chain is Eukaryotic translation initiation factor 3 subunit I from Pongo abelii (Sumatran orangutan).